We begin with the raw amino-acid sequence, 921 residues long: MATPSAAFEALMNGVTSWNVPEDAVPCELLLIGEASFPVMVNDMGQVLIAASSYGRGRLVVVSHEDYLVEAQLTPFLLNAVGWLCSSPGAPVGVHPSLAPLAKILEGSGVEAKVEPEVKDSLGVYCIDAYNETMTEKLVKFMKRGGGLLIGGQAWDWANQGDDERVLFTFPGNLVTSVAGVYFTDNKGDTSFFKVSKKMPKIPVLVSCEDDLSEDRDELLHGISELDITNSDCFPSQLLVHGALAFPLGLDSYHGCVIAAARYGRGRVVVTGHKVLFTVGKLGPFLLNAVRWLDAGRRGKIVVQTELRTLSGLLAVGGIDTSIEPNLTSDASVYCFEPVSDVGVKELQEFVAEGGGLFVGAQAWWWAFKNPGVSPLARFPGNLLLNPFGISITSQSLNPGPFRTPKAGIRTYHFRSTLAEFQVIMGRKRGNVEKGWLAKLGPDGAAFLQIPAEEIPAYMSVHRLLRKLLSRYRLPVATRENPVINDCCRGAMLSLATGLAHSGSDLSLLVPEIEDMYSSPYLRPSESPITVEVNCNNPGTRYCWMSTGLYIPGRQIIEVSLPEAAASADLKIQIGCHTDDLTRASKLFRGPLVINRCCLDKPTKSITCLWGGLLYIIVPQSSKLGTVPVTIKGAVRAPYYKLGETTQEEWKRQIQENPGPWGELATDNIILTVPTANLRTLENPEPLLRLWDEVMQAVARLGAEPFPLRLPQRIVADVQISVGWMHAGYPIMCHLESVQELINEKLIRTKGLWGPVHELGRNQQRQEWEFPPHTTEATCNLWCVYVHETVLGIPRGRANIALWPPVREKRVRIYLGKGPNVKNWNAWTALETYLQLQEAFGWEPFIRLFTEYRNQTNLPTDNVDKMNLWVKMFSHQVQKNLAPFFEAWAWPIQKEVATSLAYLPEWEENIMKLYLLTQMPH.

Residues 542–841 enclose the Peptidase M60 domain; that stretch reads YCWMSTGLYI…TYLQLQEAFG (300 aa).

Belongs to the TCAF family. Interacts with TRPM8 (via N-terminus and C-terminus domains); the interaction inhibits TRPM8 channel activity. Interacts with TRPV6.

The protein localises to the cell membrane. Functionally, positively regulates the plasma membrane cation channel TRPM8 activity. Involved in the recruitment of TRPM8 to the cell surface. Promotes prostate cancer cell migration inhibition in a TRPM8-dependent manner. The polypeptide is TRPM8 channel-associated factor 1 (Bos taurus (Bovine)).